The sequence spans 317 residues: Gluconeogenesis factor (317 aa).

It belongs to the gluconeogenesis factor family.

Its subcellular location is the cytoplasm. Required for morphogenesis under gluconeogenic growth conditions. Required, in gluconeogenic growth conditions, for the correct localization of PBP1 and hence for displaying a normal rod shape. This is Gluconeogenesis factor (mgfK) from Bacillus subtilis (strain 168).